A 412-amino-acid chain; its full sequence is Argininosuccinate synthase (412 aa).

Position 8–16 (8–16) interacts with ATP; that stretch reads AYSGGLDTS. An L-citrulline-binding site is contributed by tyrosine 87. An ATP-binding site is contributed by glycine 117. Residues threonine 119, asparagine 123, and aspartate 124 each coordinate L-aspartate. Asparagine 123 serves as a coordination point for L-citrulline. Positions 127, 175, 259, and 271 each coordinate L-citrulline.

It belongs to the argininosuccinate synthase family. Type 1 subfamily. Homotetramer.

It is found in the cytoplasm. It catalyses the reaction L-citrulline + L-aspartate + ATP = 2-(N(omega)-L-arginino)succinate + AMP + diphosphate + H(+). Its pathway is amino-acid biosynthesis; L-arginine biosynthesis; L-arginine from L-ornithine and carbamoyl phosphate: step 2/3. The chain is Argininosuccinate synthase from Clavibacter michiganensis subsp. michiganensis (strain NCPPB 382).